We begin with the raw amino-acid sequence, 413 residues long: Elongation factor 1-alpha (413 aa).

The tr-type G domain maps to 5 to 211; sequence KEHINLAFIG…DNLAAPEKPV (207 aa). A G1 region spans residues 14-21; that stretch reads GHVDHGKS. Residue 14-21 participates in GTP binding; it reads GHVDHGKS. Ser21 provides a ligand contact to Mg(2+). The tract at residues 60–64 is G2; that stretch reads GVTID. Residues 81-84 form a G3 region; it reads DCPG. GTP is bound by residues 81-85 and 136-139; these read DCPGH and NKID. The G4 stretch occupies residues 136–139; the sequence is NKID. A G5 region spans residues 175–177; that stretch reads SAF.

Belongs to the TRAFAC class translation factor GTPase superfamily. Classic translation factor GTPase family. EF-Tu/EF-1A subfamily.

The protein resides in the cytoplasm. The catalysed reaction is GTP + H2O = GDP + phosphate + H(+). Functionally, GTP hydrolase that promotes the GTP-dependent binding of aminoacyl-tRNA to the A-site of ribosomes during protein biosynthesis. In Methanobrevibacter smithii (strain ATCC 35061 / DSM 861 / OCM 144 / PS), this protein is Elongation factor 1-alpha.